A 313-amino-acid chain; its full sequence is uncharacterized protein (313 aa).

This is an uncharacterized protein from Bacillus subtilis (strain 168).